The following is a 455-amino-acid chain: tRNA modification GTPase MnmE (455 aa).

Residues Arg-26, Glu-86, and Arg-125 each coordinate (6S)-5-formyl-5,6,7,8-tetrahydrofolate. A TrmE-type G domain is found at 222–376; the sequence is GLKTAIIGRP…VEEKINQIFF (155 aa). K(+) is bound at residue Asn-232. Residues 232–237, 251–257, and 276–279 contribute to the GTP site; these read NVGKSS, TDIAGTT, and DTAG. Ser-236 contributes to the Mg(2+) binding site. Thr-251, Ile-253, and Thr-256 together coordinate K(+). Mg(2+) is bound at residue Thr-257. Residue Lys-455 coordinates (6S)-5-formyl-5,6,7,8-tetrahydrofolate.

This sequence belongs to the TRAFAC class TrmE-Era-EngA-EngB-Septin-like GTPase superfamily. TrmE GTPase family. Homodimer. Heterotetramer of two MnmE and two MnmG subunits. Requires K(+) as cofactor.

Its subcellular location is the cytoplasm. Its function is as follows. Exhibits a very high intrinsic GTPase hydrolysis rate. Involved in the addition of a carboxymethylaminomethyl (cmnm) group at the wobble position (U34) of certain tRNAs, forming tRNA-cmnm(5)s(2)U34. This Lactococcus lactis subsp. cremoris (strain SK11) protein is tRNA modification GTPase MnmE.